A 542-amino-acid chain; its full sequence is Protein phosphatase 1G (542 aa).

G2 is lipidated: N-myristoyl glycine. R22 carries the omega-N-methylarginine modification. The region spanning P26 to F502 is the PPM-type phosphatase domain. Mn(2+) is bound by residues D60 and G61. Disordered regions lie at residues A118 to N139 and Q162 to G325. A Phosphothreonine modification is found at T122. Acidic residues-rich tracts occupy residues E123–N139 and D259–M309. The residue at position 380 (K380) is an N6-acetyllysine. Mn(2+) contacts are provided by D438 and D493. The interval L510–D542 is disordered. Position 524 is a phosphoserine (S524).

This sequence belongs to the PP2C family. In terms of assembly, interacts with NOL3; may dephosphorylate NOL3. It depends on Mg(2+) as a cofactor. Requires Mn(2+) as cofactor.

The protein localises to the cytoplasm. It localises to the membrane. It carries out the reaction O-phospho-L-seryl-[protein] + H2O = L-seryl-[protein] + phosphate. The enzyme catalyses O-phospho-L-threonyl-[protein] + H2O = L-threonyl-[protein] + phosphate. The polypeptide is Protein phosphatase 1G (Rattus norvegicus (Rat)).